A 533-amino-acid polypeptide reads, in one-letter code: Tryptophan N-monooxygenase CYP79A68 (533 aa).

Residues 12 to 32 (VTPPISLSLAFIIFMFLVKFI) traverse the membrane as a helical segment. An N-linked (GlcNAc...) asparagine glycan is attached at Asn-209. Cys-471 contacts heme.

It belongs to the cytochrome P450 family. Heme is required as a cofactor. As to expression, confined to buds.

The protein resides in the membrane. The catalysed reaction is L-tryptophan + 2 reduced [NADPH--hemoprotein reductase] + 2 O2 = (E)-(indol-3-yl)acetaldehyde oxime + 2 oxidized [NADPH--hemoprotein reductase] + CO2 + 3 H2O + 2 H(+). In terms of biological role, catalyzes with low efficiency E and Z isomers of indole-3-acetaldoxime from tryptophan (Trp). This Prunus mume (Japanese apricot) protein is Tryptophan N-monooxygenase CYP79A68.